A 285-amino-acid polypeptide reads, in one-letter code: Nucleotide-binding protein Pmen_0867 (285 aa).

8-15 (GRSGSGKS) is a binding site for ATP. Residue 60–63 (DARN) coordinates GTP.

The protein belongs to the RapZ-like family.

Its function is as follows. Displays ATPase and GTPase activities. In Ectopseudomonas mendocina (strain ymp) (Pseudomonas mendocina), this protein is Nucleotide-binding protein Pmen_0867.